A 252-amino-acid chain; its full sequence is Imidazole glycerol phosphate synthase subunit HisF (252 aa).

Active-site residues include D11 and D130.

The protein belongs to the HisA/HisF family. In terms of assembly, heterodimer of HisH and HisF.

It localises to the cytoplasm. The catalysed reaction is 5-[(5-phospho-1-deoxy-D-ribulos-1-ylimino)methylamino]-1-(5-phospho-beta-D-ribosyl)imidazole-4-carboxamide + L-glutamine = D-erythro-1-(imidazol-4-yl)glycerol 3-phosphate + 5-amino-1-(5-phospho-beta-D-ribosyl)imidazole-4-carboxamide + L-glutamate + H(+). The protein operates within amino-acid biosynthesis; L-histidine biosynthesis; L-histidine from 5-phospho-alpha-D-ribose 1-diphosphate: step 5/9. Its function is as follows. IGPS catalyzes the conversion of PRFAR and glutamine to IGP, AICAR and glutamate. The HisF subunit catalyzes the cyclization activity that produces IGP and AICAR from PRFAR using the ammonia provided by the HisH subunit. This Streptococcus gordonii (strain Challis / ATCC 35105 / BCRC 15272 / CH1 / DL1 / V288) protein is Imidazole glycerol phosphate synthase subunit HisF.